The primary structure comprises 107 residues: uncharacterized protein (107 aa).

The helical transmembrane segment at 37-59 (MVFSFLTVMPGDFIKCLFLRFFV) threads the bilayer.

The protein localises to the membrane. This is an uncharacterized protein from Saccharomyces cerevisiae (strain ATCC 204508 / S288c) (Baker's yeast).